The sequence spans 132 residues: Transmembrane protein 170B (132 aa).

Topologically, residues 1–37 (MRAEGADHSMINLSVQQVLSLWAHGTVLRNLTEMWYW) are extracellular. Asn-12 carries an N-linked (GlcNAc...) asparagine glycan. A helical membrane pass occupies residues 38-58 (IFLWALFSSLFVHGAAGVLMF). Over 59–68 (VMLQRHRQGR) the chain is Cytoplasmic. A helical membrane pass occupies residues 69-89 (VISIIAVSIGFLASVTGAMIT). The Extracellular segment spans residues 90 to 104 (SAAVAGIYRVAGKNM). The chain crosses the membrane as a helical span at residues 105–125 (APLEALVWGVGQTVLTLIISF). Over 126–132 (SRILATL) the chain is Cytoplasmic.

It belongs to the TMEM170 family. In terms of assembly, interacts with CTNNB1.

The protein resides in the cell membrane. In Mus musculus (Mouse), this protein is Transmembrane protein 170B.